The following is a 434-amino-acid chain: Isocitrate lyase (434 aa).

91–93 (SGW) lines the substrate pocket. D157 is a binding site for Mg(2+). C195 (proton acceptor) is an active-site residue. Substrate-binding positions include 196–197 (GH), R232, 317–321 (NCSPS), and T351.

This sequence belongs to the isocitrate lyase/PEP mutase superfamily. Isocitrate lyase family. Homotetramer. The cofactor is Mg(2+).

It carries out the reaction D-threo-isocitrate = glyoxylate + succinate. Its pathway is carbohydrate metabolism; glyoxylate cycle; (S)-malate from isocitrate: step 1/2. Functionally, involved in the metabolic adaptation in response to environmental changes. Catalyzes the reversible formation of succinate and glyoxylate from isocitrate, a key step of the glyoxylate cycle, which operates as an anaplerotic route for replenishing the tricarboxylic acid cycle during growth on fatty acid substrates. This chain is Isocitrate lyase (aceA), found in Escherichia coli O6:H1 (strain CFT073 / ATCC 700928 / UPEC).